Reading from the N-terminus, the 480-residue chain is Endothelial transcription factor GATA-2 (480 aa).

The residue at position 73 (S73) is a Phosphoserine. R86 is modified (asymmetric dimethylarginine). The tract at residues 166-208 (SGSHLFGFPPTPPKEVSPDPSTTGAASPASSSAGGSVARGEDK) is disordered. Low complexity predominate over residues 183-201 (PDPSTTGAASPASSSAGGS). At S192 the chain carries Phosphoserine. 2 consecutive GATA-type zinc fingers follow at residues 295-319 (CVNC…CNAC) and 349-373 (CANC…CNAC). K389 is covalently cross-linked (Glycyl lysine isopeptide (Lys-Gly) (interchain with G-Cter in SUMO2)). Residues 457 to 480 (TPIHPSSSLSFGHPHPSSMVTAMG) are disordered.

In terms of assembly, interacts with BRD3. Interacts with AR and CCAR1. Interacts with MDFIC.

Its subcellular location is the nucleus. In terms of biological role, transcriptional activator which regulates endothelin-1 gene expression in endothelial cells. Binds to the consensus sequence 5'-AGATAG-3'. This Mus musculus (Mouse) protein is Endothelial transcription factor GATA-2 (Gata2).